Here is a 415-residue protein sequence, read N- to C-terminus: Corticotropin-releasing factor receptor 1 (415 aa).

The first 24 residues, Met-1–Thr-24, serve as a signal peptide directing secretion. At Ser-25–Lys-111 the chain is on the extracellular side. Intrachain disulfides connect Cys-30–Cys-54, Cys-44–Cys-87, and Cys-68–Cys-102. 4 N-linked (GlcNAc...) asparagine glycosylation sites follow: Asn-38, Asn-45, Asn-78, and Asn-90. The helical transmembrane segment at Thr-112 to Leu-142 threads the bilayer. Over Arg-143–Cys-149 the chain is Cytoplasmic. Residues Leu-150–Leu-174 traverse the membrane as a helical segment. Over Thr-175 to Arg-189 the chain is Extracellular. A disulfide bridge links Cys-188 with Cys-258. The helical transmembrane segment at Leu-190 to Val-218 threads the bilayer. The Cytoplasmic segment spans residues Leu-219–Lys-225. Residues Leu-226–Tyr-253 form a helical membrane-spanning segment. Over Asp-254–Asp-269 the chain is Extracellular. The helical transmembrane segment at Phe-270–Met-295 threads the bilayer. At Thr-296–Thr-306 the chain is on the cytoplasmic side. Residues Ile-307–Phe-331 traverse the membrane as a helical segment. At Val-332 to Glu-338 the chain is on the extracellular side. Residues Ile-339–Ser-368 form a helical membrane-spanning segment. At Glu-369–Ile-415 the chain is on the cytoplasmic side.

This sequence belongs to the G-protein coupled receptor 2 family. As to quaternary structure, interacts (via N-terminal extracellular domain) with CRF and UCN.

It is found in the cell membrane. Its function is as follows. G-protein coupled receptor for CRH (corticotropin-releasing factor) and UCN (urocortin). Has high affinity for CRH and UCN. Ligand binding causes a conformation change that triggers signaling via guanine nucleotide-binding proteins (G proteins) and down-stream effectors, such as adenylate cyclase. Promotes the activation of adenylate cyclase, leading to increased intracellular cAMP levels. In Xenopus laevis (African clawed frog), this protein is Corticotropin-releasing factor receptor 1 (crhr1).